The chain runs to 241 residues: Eukaryotic translation initiation factor 3 subunit J (241 aa).

Residues 1–97 (MEEDWEQLSE…EEEDMTPEQK (97 aa)) are disordered. The segment covering 28–45 (GEDEEEEVKDSWEDEDEL) has biased composition (acidic residues). Residues 31-119 (EEEEVKDSWE…ESDLKNALDT (89 aa)) adopt a coiled-coil conformation. 2 stretches are compositionally biased toward basic and acidic residues: residues 46–58 (EEKKDEEKVETPK) and 69–87 (IADKEKLKQEEAERRRLEK).

It belongs to the eIF-3 subunit J family. Component of the eukaryotic translation initiation factor 3 (eIF-3) complex.

It localises to the cytoplasm. Functionally, component of the eukaryotic translation initiation factor 3 (eIF-3) complex, which is involved in protein synthesis of a specialized repertoire of mRNAs and, together with other initiation factors, stimulates binding of mRNA and methionyl-tRNAi to the 40S ribosome. The eIF-3 complex specifically targets and initiates translation of a subset of mRNAs involved in cell proliferation. The polypeptide is Eukaryotic translation initiation factor 3 subunit J (Aedes aegypti (Yellowfever mosquito)).